Consider the following 206-residue polypeptide: Threonine efflux protein (206 aa).

A helical transmembrane segment spans residues 1–21; it reads MLMLFFTVAMVHIVALMSPGP. Over 22 to 43 the chain is Periplasmic; the sequence is DFFFVSQTAVSRSRKEAMMGVL. The helical transmembrane segment at 44 to 64 threads the bilayer; the sequence is GITCGVMVWAGVALLGLHLII. The Cytoplasmic portion of the chain corresponds to 65 to 66; that stretch reads EK. Residues 67 to 87 traverse the membrane as a helical segment; it reads MAWLHTIIMVGGGLYLCWMGY. Topologically, residues 88-149 are periplasmic; sequence QMLRGALKKQ…VGDNVGAAAR (62 aa). A helical transmembrane segment spans residues 150–173; sequence WGIFALITLETLAWFTVVASLFAL. The Cytoplasmic portion of the chain corresponds to 174-206; that stretch reads PKMRRGYQRLAKWIDGFAGALFAGFGIHLIISR.

It belongs to the Rht family.

The protein localises to the cell inner membrane. In terms of biological role, conducts the efflux of threonine. The chain is Threonine efflux protein (rhtC) from Salmonella typhi.